The following is a 219-amino-acid chain: Adenylate kinase (219 aa).

13–18 (GAGKGT) contacts ATP. Residues 33–62 (STGDIFRAAIKNETKMGLEAKKYIDAGNLV) are NMP. AMP contacts are provided by residues T34, R39, 60-62 (NLV), 88-91 (GYPR), and Q95. An LID region spans residues 129–167 (GRFICRTCGATYHKLYNKPKVEGTCDVCGGHDFYQRDDD). R130 is a binding site for ATP. Zn(2+) contacts are provided by C133 and C136. ATP is bound at residue 139–140 (TY). 2 residues coordinate Zn(2+): C153 and C156. AMP-binding residues include R164 and R175. An ATP-binding site is contributed by R203.

Belongs to the adenylate kinase family. As to quaternary structure, monomer.

The protein resides in the cytoplasm. The catalysed reaction is AMP + ATP = 2 ADP. Its pathway is purine metabolism; AMP biosynthesis via salvage pathway; AMP from ADP: step 1/1. Functionally, catalyzes the reversible transfer of the terminal phosphate group between ATP and AMP. Plays an important role in cellular energy homeostasis and in adenine nucleotide metabolism. The protein is Adenylate kinase of Lactiplantibacillus plantarum (strain ATCC BAA-793 / NCIMB 8826 / WCFS1) (Lactobacillus plantarum).